The primary structure comprises 217 residues: Small ribosomal subunit protein uS3c (217 aa).

The 73-residue stretch at 47 to 119 (VRTHIKSSSN…KLHIAIEKVA (73 aa)) folds into the KH type-2 domain.

It belongs to the universal ribosomal protein uS3 family. In terms of assembly, part of the 30S ribosomal subunit.

Its subcellular location is the plastid. The protein localises to the chloroplast. In Pinus thunbergii (Japanese black pine), this protein is Small ribosomal subunit protein uS3c (rps3).